Reading from the N-terminus, the 474-residue chain is Glycogen synthase (474 aa).

Lysine 15 serves as a coordination point for ADP-alpha-D-glucose.

Belongs to the glycosyltransferase 1 family. Bacterial/plant glycogen synthase subfamily.

It catalyses the reaction [(1-&gt;4)-alpha-D-glucosyl](n) + ADP-alpha-D-glucose = [(1-&gt;4)-alpha-D-glucosyl](n+1) + ADP + H(+). It functions in the pathway glycan biosynthesis; glycogen biosynthesis. Its function is as follows. Synthesizes alpha-1,4-glucan chains using ADP-glucose. The protein is Glycogen synthase of Chlamydia muridarum (strain MoPn / Nigg).